The following is a 1164-amino-acid chain: MVKEFLGEGSQAGQNLLRLVSRGNAIIAELLRLSAHIPSVFKLEDRNEARKYQDILLDFKYLSNPDFYESKIEENADLVDLETEFRDNHIDILIRFYHLFESIYKYIMDLEHYIVDVEKGFYIHLTIEAILINGDGKQLLSEAVYLYGVMLILMDNLIEGPVRERMLISYLRNKGPVDLPLIDEVCKLCKSTGYIPGSPKKPPNYPEEYFRRVELPENVISMIVGRLRSDDLYNGTESFPQPEHRSVALSTQACMIYVILYFIPDILNNKNSIMREIVDKFFPDNWVISFFLGFTIDLSVAWEPYKAAKTAMGNTIIQSNIQYQTQRFWKEVSELNKLVDDLLVDGLLVEEYIVDNVHKIITTLRRCNVTIRWVMLHSNASQKKFKDLVLMGGSQEDVLYLLLNTAQLEFVFKNIFQQLLATKEEKWEENKKLASDSMVELSEYFSGEKALTRVKKNENLQKWFGEISQKISQLDSTDSTSTGRKIQQLSLALEEVEQFQQIDSSIQVKQFLIETRQFLTKMIKIVNIKEEVLVNLSVCADMSYAWEIVNNYVDQMQKGIKSDPKCVLKLRATFLKLVSILDLPLVRIAQCSSPDLISVSEYYSGELVGYVRKVLEIVPKQMFLILKQIINMQTNNIQEMPTKVEKERLRDFAQLDQRYDLARATHSVSVFTEGILAMETTLVGIIEVDPKQLLEDGIRKELVLQIALAMDKTLIFSGKPYQAPSNKQQQQEIELLQRLKELSNILDGFRRSFQYIQDYVNIQGLKIWQEEFSRIVNFYVEQECNSFLKKKVYDWQSQYQSVAIPIPKFPSQSDQNSQQSVNMIGRLARELLNQTNCKTTLYLNQIGWFDPSSGKELVGINTWSILHQSVGIFGLTGLDKLFSFMMVKDLQVFVSQTRSLVEKSLKGFLNEFEDYLRPTTNIPDTMIRYQQALDKTKLLYPIFIDVLTKIGQIQLIRRQISNQLNFHCKIDSNMLFSSLDIMNKSLLNDIESHFQRPDSNPYPSDDNTLLFDLAQYLDTAGINDPFTKIYITTSPLEQFPCLLFLFVLSQVSKFQFNSKLNVMSSKKQKNSYDWTPFIIGCITILQQFHSLHTQKFLAFVGQYIKSHINIALANPKENNKDDADYPEDVIGLLRFLEDFCKYSHTSRKIVEGYVPPYIFDYYNN.

It belongs to the strumpellin family. As to quaternary structure, probable component of the WASH complex.

The protein is WASH complex subunit 5 of Dictyostelium discoideum (Social amoeba).